A 218-amino-acid polypeptide reads, in one-letter code: MPDPLPDLSSLRLAYTRAELRRADLDPDPLRQFQGWLGEALQAGLREPYALSLATADASGRPSVRTVLLRGADERGLTFYTNYESHKGHDLAQNPQAELLFFWADLERQVRAYGPVERVSEEESTAYFHARPRESQIAAHASDPQSAPIANRGALEAKLAALQAQYPEGTPVPRPDFWGGYRVRVREWEFWQGRPSRLHDRFRYTWEGEGWRIERLMP.

Substrate-binding positions include 12–15 (RLAY) and Arg70. FMN is bound by residues 65–70 (RTVLLR), 80–81 (YT), Lys87, and Gln109. The substrate site is built by Tyr127, Arg131, and Ser135. Residues 145 to 146 (QS) and Trp191 contribute to the FMN site. Position 197-199 (197-199 (RLH)) interacts with substrate. Arg201 is an FMN binding site.

It belongs to the pyridoxamine 5'-phosphate oxidase family. As to quaternary structure, homodimer. FMN serves as cofactor.

The enzyme catalyses pyridoxamine 5'-phosphate + O2 + H2O = pyridoxal 5'-phosphate + H2O2 + NH4(+). The catalysed reaction is pyridoxine 5'-phosphate + O2 = pyridoxal 5'-phosphate + H2O2. It participates in cofactor metabolism; pyridoxal 5'-phosphate salvage; pyridoxal 5'-phosphate from pyridoxamine 5'-phosphate: step 1/1. It functions in the pathway cofactor metabolism; pyridoxal 5'-phosphate salvage; pyridoxal 5'-phosphate from pyridoxine 5'-phosphate: step 1/1. In terms of biological role, catalyzes the oxidation of either pyridoxine 5'-phosphate (PNP) or pyridoxamine 5'-phosphate (PMP) into pyridoxal 5'-phosphate (PLP). In Deinococcus geothermalis (strain DSM 11300 / CIP 105573 / AG-3a), this protein is Pyridoxine/pyridoxamine 5'-phosphate oxidase.